A 66-amino-acid polypeptide reads, in one-letter code: Putative alpha-neurotoxin RjAa16 (66 aa).

The LCN-type CS-alpha/beta domain maps to lysine 1 to arginine 60. Intrachain disulfides connect cysteine 11/cysteine 59, cysteine 15/cysteine 35, cysteine 21/cysteine 42, and cysteine 25/cysteine 44.

Belongs to the long (4 C-C) scorpion toxin superfamily. Sodium channel inhibitor family. Alpha subfamily. As to expression, expressed by the venom gland.

It is found in the secreted. Alpha toxins bind voltage-independently at site-3 of sodium channels (Nav) and inhibits the inactivation of the activated channels, thereby blocking neuronal transmission. This Rhopalurus junceus (Caribbean blue scorpion) protein is Putative alpha-neurotoxin RjAa16.